The following is a 253-amino-acid chain: Sec-independent protein translocase protein TatC (253 aa).

A run of 5 helical transmembrane segments spans residues 19–39 (ILIIVVFFVIALVVGFFLATP), 70–90 (FAFTSAFILVFPIILYQLWAF), 109–129 (IAFFLFLGGLSFAYFILFPFL), 154–174 (FLFQITMPFGVLFQLPVVVMF), and 194–214 (FFVLLVVAGFITPPELISHLM).

This sequence belongs to the TatC family. Forms a complex with TatA.

It is found in the cell membrane. In terms of biological role, part of the twin-arginine translocation (Tat) system that transports large folded proteins containing a characteristic twin-arginine motif in their signal peptide across membranes. In Halalkalibacterium halodurans (strain ATCC BAA-125 / DSM 18197 / FERM 7344 / JCM 9153 / C-125) (Bacillus halodurans), this protein is Sec-independent protein translocase protein TatC.